The chain runs to 398 residues: Succinyl-diaminopimelate desuccinylase (398 aa).

Zn(2+) is bound at residue histidine 73. Aspartate 75 is a catalytic residue. Aspartate 106 contacts Zn(2+). Residue glutamate 140 is the Proton acceptor of the active site. 3 residues coordinate Zn(2+): glutamate 141, glutamate 169, and histidine 366.

The protein belongs to the peptidase M20A family. DapE subfamily. In terms of assembly, homodimer. Zn(2+) serves as cofactor. It depends on Co(2+) as a cofactor.

The enzyme catalyses N-succinyl-(2S,6S)-2,6-diaminopimelate + H2O = (2S,6S)-2,6-diaminopimelate + succinate. Its pathway is amino-acid biosynthesis; L-lysine biosynthesis via DAP pathway; LL-2,6-diaminopimelate from (S)-tetrahydrodipicolinate (succinylase route): step 3/3. Functionally, catalyzes the hydrolysis of N-succinyl-L,L-diaminopimelic acid (SDAP), forming succinate and LL-2,6-diaminopimelate (DAP), an intermediate involved in the bacterial biosynthesis of lysine and meso-diaminopimelic acid, an essential component of bacterial cell walls. The polypeptide is Succinyl-diaminopimelate desuccinylase (Agrobacterium fabrum (strain C58 / ATCC 33970) (Agrobacterium tumefaciens (strain C58))).